The chain runs to 349 residues: Aspartate-semialdehyde dehydrogenase (349 aa).

NADP(+) contacts are provided by residues 12-15 (TGSV) and 39-40 (NS). Residue Arg113 participates in phosphate binding. The Acyl-thioester intermediate role is filled by Cys148. Gln175 lines the substrate pocket. 178 to 179 (SG) provides a ligand contact to NADP(+). Glu201 provides a ligand contact to substrate. Lys204 serves as a coordination point for phosphate. Arg234 serves as a coordination point for substrate. The active-site Proton acceptor is the His241. 326–327 (NT) contacts NADP(+).

Belongs to the aspartate-semialdehyde dehydrogenase family. Homodimer.

The enzyme catalyses L-aspartate 4-semialdehyde + phosphate + NADP(+) = 4-phospho-L-aspartate + NADPH + H(+). It participates in amino-acid biosynthesis; L-lysine biosynthesis via DAP pathway; (S)-tetrahydrodipicolinate from L-aspartate: step 2/4. Its pathway is amino-acid biosynthesis; L-methionine biosynthesis via de novo pathway; L-homoserine from L-aspartate: step 2/3. It functions in the pathway amino-acid biosynthesis; L-threonine biosynthesis; L-threonine from L-aspartate: step 2/5. In terms of biological role, catalyzes the NADPH-dependent formation of L-aspartate-semialdehyde (L-ASA) by the reductive dephosphorylation of L-aspartyl-4-phosphate. This Leptospira interrogans serogroup Icterohaemorrhagiae serovar Lai (strain 56601) protein is Aspartate-semialdehyde dehydrogenase.